A 390-amino-acid polypeptide reads, in one-letter code: Homoserine O-succinyltransferase (390 aa).

Positions 59–369 constitute an AB hydrolase-1 domain; it reads NAVLVCHALN…PHGHDAFLLD (311 aa). Serine 165 functions as the Nucleophile in the catalytic mechanism. Residue arginine 235 participates in substrate binding. Catalysis depends on residues aspartate 330 and histidine 363. Aspartate 364 contributes to the substrate binding site.

The protein belongs to the AB hydrolase superfamily. MetX family. In terms of assembly, homodimer.

Its subcellular location is the cytoplasm. It carries out the reaction L-homoserine + succinyl-CoA = O-succinyl-L-homoserine + CoA. It functions in the pathway amino-acid biosynthesis; L-methionine biosynthesis via de novo pathway; O-succinyl-L-homoserine from L-homoserine: step 1/1. Transfers a succinyl group from succinyl-CoA to L-homoserine, forming succinyl-L-homoserine. In Cupriavidus metallidurans (strain ATCC 43123 / DSM 2839 / NBRC 102507 / CH34) (Ralstonia metallidurans), this protein is Homoserine O-succinyltransferase.